Reading from the N-terminus, the 295-residue chain is 4-hydroxy-tetrahydrodipicolinate synthase 1 (295 aa).

Threonine 46 provides a ligand contact to pyruvate. Tyrosine 134 acts as the Proton donor/acceptor in catalysis. Lysine 162 (schiff-base intermediate with substrate) is an active-site residue. Residue valine 204 participates in pyruvate binding.

Belongs to the DapA family. Homotetramer; dimer of dimers.

It is found in the cytoplasm. The enzyme catalyses L-aspartate 4-semialdehyde + pyruvate = (2S,4S)-4-hydroxy-2,3,4,5-tetrahydrodipicolinate + H2O + H(+). Its pathway is amino-acid biosynthesis; L-lysine biosynthesis via DAP pathway; (S)-tetrahydrodipicolinate from L-aspartate: step 3/4. Catalyzes the condensation of (S)-aspartate-beta-semialdehyde [(S)-ASA] and pyruvate to 4-hydroxy-tetrahydrodipicolinate (HTPA). The chain is 4-hydroxy-tetrahydrodipicolinate synthase 1 from Halalkalibacterium halodurans (strain ATCC BAA-125 / DSM 18197 / FERM 7344 / JCM 9153 / C-125) (Bacillus halodurans).